The chain runs to 676 residues: UvrABC system protein B (676 aa).

In terms of domain architecture, Helicase ATP-binding spans 26-414 (EGLDAGLAHQ…SAGEIADQVV (389 aa)). An ATP-binding site is contributed by 39 to 46 (GVTGSGKT). Residues 92 to 115 (YYDYYQPEAYVPTTDTFIEKDSSV) carry the Beta-hairpin motif. One can recognise a Helicase C-terminal domain in the interval 432 to 598 (QVDDLLSEIR…ALKRNIKDIM (167 aa)). One can recognise a UVR domain in the interval 636 to 671 (EKEITKLEAQMYKHAQDLEFELAAQKRDEIEKLRQQ).

This sequence belongs to the UvrB family. Forms a heterotetramer with UvrA during the search for lesions. Interacts with UvrC in an incision complex.

Its subcellular location is the cytoplasm. The UvrABC repair system catalyzes the recognition and processing of DNA lesions. A damage recognition complex composed of 2 UvrA and 2 UvrB subunits scans DNA for abnormalities. Upon binding of the UvrA(2)B(2) complex to a putative damaged site, the DNA wraps around one UvrB monomer. DNA wrap is dependent on ATP binding by UvrB and probably causes local melting of the DNA helix, facilitating insertion of UvrB beta-hairpin between the DNA strands. Then UvrB probes one DNA strand for the presence of a lesion. If a lesion is found the UvrA subunits dissociate and the UvrB-DNA preincision complex is formed. This complex is subsequently bound by UvrC and the second UvrB is released. If no lesion is found, the DNA wraps around the other UvrB subunit that will check the other stand for damage. The sequence is that of UvrABC system protein B from Vibrio vulnificus (strain CMCP6).